We begin with the raw amino-acid sequence, 161 residues long: Nucleotide-binding protein Aave_1854 (161 aa).

The protein belongs to the YajQ family.

Functionally, nucleotide-binding protein. The polypeptide is Nucleotide-binding protein Aave_1854 (Paracidovorax citrulli (strain AAC00-1) (Acidovorax citrulli)).